A 414-amino-acid polypeptide reads, in one-letter code: MINLKLIETNFDEFNAKLKAKKVDEGVLKNLLDTYNELKIKKQELENLQAVQNAKSKEVGILARSGADTTLLKTELEENKKLMQTASNLVSELETKLDTVASRVPNVIDDDVPLGKDDNDNVCIKTILEPREFNFTPKEHFELGENLGWLDFATGAKLSGSRFTVLRSDGARLSRALVNFMIDFNTARGFELVNVPFLVNSNTLYGTGQLPKFEEDLYKIRDEDLYLIPTSEVPVTNIYNNEIIPVENLPIKMTCYSACFRQEAGSAGRDTRGMIRQHQFEKVELVSISKPEDSAKILDEMVSCASDMLKELGLPHRHMMLCSADLGFGAAKTIDLEVWLPGQGKYREISSISNTRDFQARRAKIRYKDGKKNALVHTLNGSSLAVGRTLIAIMENYQNSDGSINIPEVLKKYM.

Residue 230-232 (TSE) coordinates L-serine. ATP is bound at residue 261–263 (RQE). Position 284 (E284) interacts with L-serine. 348–351 (EISS) is a binding site for ATP. L-serine is bound at residue S382.

The protein belongs to the class-II aminoacyl-tRNA synthetase family. Type-1 seryl-tRNA synthetase subfamily. Homodimer. The tRNA molecule binds across the dimer.

The protein resides in the cytoplasm. It carries out the reaction tRNA(Ser) + L-serine + ATP = L-seryl-tRNA(Ser) + AMP + diphosphate + H(+). The catalysed reaction is tRNA(Sec) + L-serine + ATP = L-seryl-tRNA(Sec) + AMP + diphosphate + H(+). The protein operates within aminoacyl-tRNA biosynthesis; selenocysteinyl-tRNA(Sec) biosynthesis; L-seryl-tRNA(Sec) from L-serine and tRNA(Sec): step 1/1. Catalyzes the attachment of serine to tRNA(Ser). Is also able to aminoacylate tRNA(Sec) with serine, to form the misacylated tRNA L-seryl-tRNA(Sec), which will be further converted into selenocysteinyl-tRNA(Sec). This Campylobacter fetus subsp. fetus (strain 82-40) protein is Serine--tRNA ligase.